Consider the following 115-residue polypeptide: Nucleoid-associated protein alr5067 (115 aa).

This sequence belongs to the YbaB/EbfC family. As to quaternary structure, homodimer.

The protein localises to the cytoplasm. It is found in the nucleoid. Its function is as follows. Binds to DNA and alters its conformation. May be involved in regulation of gene expression, nucleoid organization and DNA protection. The sequence is that of Nucleoid-associated protein alr5067 from Nostoc sp. (strain PCC 7120 / SAG 25.82 / UTEX 2576).